The following is a 366-amino-acid chain: D-alanine--D-alanine ligase (366 aa).

In terms of domain architecture, ATP-grasp spans 146–352 (KICFEHAGLQ…YTELINRLIE (207 aa)). 179-234 (EKKLRYPMFVKPANMGSSVGISKAHNRNELIEAIELALAYDRKFLIEKAINAREME) lines the ATP pocket. Residues D305, E319, and N321 each contribute to the Mg(2+) site.

This sequence belongs to the D-alanine--D-alanine ligase family. It depends on Mg(2+) as a cofactor. The cofactor is Mn(2+).

It localises to the cytoplasm. It catalyses the reaction 2 D-alanine + ATP = D-alanyl-D-alanine + ADP + phosphate + H(+). Its pathway is cell wall biogenesis; peptidoglycan biosynthesis. Its function is as follows. Cell wall formation. The sequence is that of D-alanine--D-alanine ligase from Chloroherpeton thalassium (strain ATCC 35110 / GB-78).